A 251-amino-acid polypeptide reads, in one-letter code: Large ribosomal subunit protein uL16m (251 aa).

The N-terminal 29 residues, 1–29 (MWRLLARASAPLLRVPLSDSWALLPASAG), are a transit peptide targeting the mitochondrion.

The protein belongs to the universal ribosomal protein uL16 family. Component of the mitochondrial large ribosomal subunit (mt-LSU). Mature mammalian 55S mitochondrial ribosomes consist of a small (28S) and a large (39S) subunit. The 28S small subunit contains a 12S ribosomal RNA (12S mt-rRNA) and 30 different proteins. The 39S large subunit contains a 16S rRNA (16S mt-rRNA), a copy of mitochondrial valine transfer RNA (mt-tRNA(Val)), which plays an integral structural role, and 52 different proteins.

The protein resides in the mitochondrion. The protein is Large ribosomal subunit protein uL16m (MRPL16) of Homo sapiens (Human).